A 1100-amino-acid polypeptide reads, in one-letter code: Guanylate cyclase 2G (1100 aa).

The N-terminal stretch at 1–43 is a signal peptide; sequence MASRARSEPPLEHRFYGGAESHAGHSSLVLTLFVVMLMTCLEA. At 44–481 the chain is on the extracellular side; that stretch reads AKLTVGFHAP…GAGMTASVTA (438 aa). N-linked (GlcNAc...) asparagine glycosylation is found at Asn-55, Asn-85, Asn-94, Asn-418, and Asn-443. A helical transmembrane segment spans residues 482–502; that stretch reads VIPTVTLLVVASAAAITGLML. Residues 503 to 1100 lie on the Cytoplasmic side of the membrane; sequence WRLRGKVQNH…EEEAKVPEIL (598 aa). The 278-residue stretch at 549-826 folds into the Protein kinase domain; that stretch reads STVKISADCG…PAFPSIKKTL (278 aa). The region spanning 901-1031 is the Guanylate cyclase domain; that stretch reads TIFFSDIVGF…DTVNMASRME (131 aa).

Belongs to the adenylyl cyclase class-4/guanylyl cyclase family. Homooligomer. May interact with NPR1/GC-A. N-glycosylated. As to expression, expressed in lung, kidney and skeletal muscle. Low levels in intestine.

Its subcellular location is the cell membrane. It is found in the cytoplasm. It carries out the reaction GTP = 3',5'-cyclic GMP + diphosphate. The sequence is that of Guanylate cyclase 2G (Gucy2g) from Rattus norvegicus (Rat).